We begin with the raw amino-acid sequence, 880 residues long: Valine--tRNA ligase (880 aa).

The 'HIGH' region signature appears at Pro-49–His-59. A 'KMSKS' region motif is present at residues Lys-525–Ser-529. Lys-528 contacts ATP. The stretch at Leu-809–Lys-879 forms a coiled coil.

The protein belongs to the class-I aminoacyl-tRNA synthetase family. ValS type 1 subfamily. In terms of assembly, monomer.

It is found in the cytoplasm. The catalysed reaction is tRNA(Val) + L-valine + ATP = L-valyl-tRNA(Val) + AMP + diphosphate. In terms of biological role, as ValRS can inadvertently accommodate and process structurally similar amino acids such as threonine, to avoid such errors, it has a 'posttransfer' editing activity that hydrolyzes mischarged Thr-tRNA(Val) in a tRNA-dependent manner. Catalyzes the attachment of valine to tRNA(Val). In Bacillus subtilis (strain 168), this protein is Valine--tRNA ligase.